The primary structure comprises 710 residues: Forkhead box protein P2 (710 aa).

The segment covering 1 to 28 has biased composition (polar residues); sequence MMQESATETISNSSMNQNGMSTLSSQLD. 2 disordered regions span residues 1 to 44 and 272 to 334; these read MMQE…SSEV and HSQE…TGAS. Over residues 273 to 283 the composition is skewed to basic and acidic residues; it reads SQEDNGIKHGG. A compositionally biased stretch (low complexity) spans 287 to 300; the sequence is TTNNSSSTTSSTTS. Over residues 310–319 the composition is skewed to polar residues; sequence SIVNGQSSVL. The span at 321 to 332 shows a compositional bias: basic and acidic residues; that stretch reads ARRDSSSHEETG. Residues 343–366 form a C2H2-type zinc finger; sequence CKWPGCESICEDFGQFLKHLNNEH. Residues 383-404 form a leucine-zipper region; that stretch reads VQQLEIQLSKERERLQAMMTHL. The CTBP1-binding stretch occupies residues 417 to 421; sequence PLNLV. Residues 433–454 show a composition bias toward low complexity; the sequence is TSPQSLPQTPTTPTAPVTPITQ. The disordered stretch occupies residues 433–460; it reads TSPQSLPQTPTTPTAPVTPITQGPSVIT. Residues 499 to 589 constitute a DNA-binding region (fork-head); it reads RPPFTYATLI…SQKITGSPTL (91 aa). Disordered regions lie at residues 644–663 and 673–710; these read LDHI…QPHI and VIAE…EDLE. The span at 694 to 710 shows a compositional bias: acidic residues; sequence LEDDREIEEEPLSEDLE.

As to quaternary structure, forms homodimers and heterodimers with FOXP1 and FOXP4. Dimerization is required for DNA-binding. Interacts with CTBP1. Interacts with FOXP1. Interacts with TBR1. Interacts with ZMYM2.

The protein localises to the nucleus. Functionally, transcriptional repressor that may play a role in the specification and differentiation of lung epithelium. May also play a role in developing neural, gastrointestinal and cardiovascular tissues. Can act with CTBP1 to synergistically repress transcription but CTPBP1 is not essential. Plays a role in synapse formation by regulating SRPX2 levels. This Rattus norvegicus (Rat) protein is Forkhead box protein P2 (Foxp2).